We begin with the raw amino-acid sequence, 824 residues long: Leucine--tRNA ligase (824 aa).

The 'HIGH' region signature appears at 42 to 52 (PYPSGRIHMGH). The short motif at 581–585 (KMSKS) is the 'KMSKS' region element. Lys-584 is a binding site for ATP.

The protein belongs to the class-I aminoacyl-tRNA synthetase family.

The protein localises to the cytoplasm. The enzyme catalyses tRNA(Leu) + L-leucine + ATP = L-leucyl-tRNA(Leu) + AMP + diphosphate. This chain is Leucine--tRNA ligase, found in Geobacter sulfurreducens (strain ATCC 51573 / DSM 12127 / PCA).